Reading from the N-terminus, the 172-residue chain is Ribosome maturation factor RimM (172 aa).

The PRC barrel domain occupies 96-168; that stretch reads DGEFYYHEII…RIEVELMEGL (73 aa).

It belongs to the RimM family. In terms of assembly, binds ribosomal protein uS19.

Its subcellular location is the cytoplasm. Functionally, an accessory protein needed during the final step in the assembly of 30S ribosomal subunit, possibly for assembly of the head region. Essential for efficient processing of 16S rRNA. May be needed both before and after RbfA during the maturation of 16S rRNA. It has affinity for free ribosomal 30S subunits but not for 70S ribosomes. The polypeptide is Ribosome maturation factor RimM (Streptococcus thermophilus (strain CNRZ 1066)).